A 501-amino-acid polypeptide reads, in one-letter code: Glycerol kinase (501 aa).

Thr-17 is a binding site for ADP. Positions 17, 18, and 19 each coordinate ATP. Thr-17 contacts sn-glycerol 3-phosphate. Arg-21 contributes to the ADP binding site. Sn-glycerol 3-phosphate-binding residues include Arg-87, Glu-88, Tyr-139, and Asp-243. Glycerol contacts are provided by Arg-87, Glu-88, Tyr-139, Asp-243, and Gln-244. 2 residues coordinate ADP: Thr-265 and Gly-308. ATP contacts are provided by Thr-265, Gly-308, Gln-312, and Gly-409. ADP contacts are provided by Gly-409 and Asn-413.

The protein belongs to the FGGY kinase family.

It catalyses the reaction glycerol + ATP = sn-glycerol 3-phosphate + ADP + H(+). Its pathway is polyol metabolism; glycerol degradation via glycerol kinase pathway; sn-glycerol 3-phosphate from glycerol: step 1/1. Its activity is regulated as follows. Inhibited by fructose 1,6-bisphosphate (FBP). Key enzyme in the regulation of glycerol uptake and metabolism. Catalyzes the phosphorylation of glycerol to yield sn-glycerol 3-phosphate. The protein is Glycerol kinase of Pseudomonas savastanoi pv. phaseolicola (strain 1448A / Race 6) (Pseudomonas syringae pv. phaseolicola (strain 1448A / Race 6)).